We begin with the raw amino-acid sequence, 160 residues long: Ribosomal RNA large subunit methyltransferase H (160 aa).

Residues leucine 76, glycine 108, and 127 to 132 (LGKMTW) each bind S-adenosyl-L-methionine.

Belongs to the RNA methyltransferase RlmH family. Homodimer.

It is found in the cytoplasm. It carries out the reaction pseudouridine(1915) in 23S rRNA + S-adenosyl-L-methionine = N(3)-methylpseudouridine(1915) in 23S rRNA + S-adenosyl-L-homocysteine + H(+). Specifically methylates the pseudouridine at position 1915 (m3Psi1915) in 23S rRNA. The chain is Ribosomal RNA large subunit methyltransferase H from Rhizobium meliloti (strain 1021) (Ensifer meliloti).